Reading from the N-terminus, the 236-residue chain is HTH-type transcriptional regulator SACE_5812 (236 aa).

Positions 30–90 (LLTQDKIVSA…LALDAVFGEV (61 aa)) constitute an HTH tetR-type domain. The segment at residues 53–72 (SMRKLADRLQAHATSLYWHV) is a DNA-binding region (H-T-H motif).

Its function is as follows. Transcriptional regulator that inhibits erythromycin production. Directly represses the expression of SACE_5813, eryAI (encoding polyketide synthase I) and ermE (encoding rRNA methyltransferase), suggesting its direct regulation of the erythromycin biosynthesis gene cluster. May play an important role in regulating secondary metabolism in actinomycetes. The chain is HTH-type transcriptional regulator SACE_5812 from Saccharopolyspora erythraea (strain ATCC 11635 / DSM 40517 / JCM 4748 / NBRC 13426 / NCIMB 8594 / NRRL 2338).